The chain runs to 205 residues: Keratin-associated protein 4-6 (205 aa).

30 tandem repeats follow at residues 20–24 (CCRPS), 25–29 (CCQTT), 30–34 (CCRTT), 35–39 (CCRPS), 40–44 (CCVSS), 45–49 (CCRPQ), 50–54 (CCQSV), 55–59 (CCQPT), 60–64 (CCRPS), 65–68 (CCPS), 69–73 (CCQTT), 74–78 (CCRTT), 79–83 (CCRPS), 84–88 (CCVSS), 89–93 (CCRPQ), 94–98 (CCQSV), 99–103 (CCQPT), 104–108 (CCRPS), 114–118 (CCRPS), 119–123 (CCVSR), 124–128 (CCRSQ), 129–133 (CCQSV), 134–138 (CCQPT), 139–143 (CCRPS), 144–148 (CCISS), 149–153 (CCRPS), 154–158 (CCESS), 159–163 (CCRPC), 164–168 (CCRPC), and 169–173 (CCLRP). The 30 X 5 AA repeats of C-C-[IRQVEL]-[SPTR]-[STVQRCP] stretch occupies residues 20–173 (CCRPSCCQTT…CCRPCCCLRP (154 aa)).

The protein belongs to the KRTAP type 4 family. Interacts with hair keratins. As to expression, expressed in the hair follicles.

Its function is as follows. In the hair cortex, hair keratin intermediate filaments are embedded in an interfilamentous matrix, consisting of hair keratin-associated proteins (KRTAP), which are essential for the formation of a rigid and resistant hair shaft through their extensive disulfide bond cross-linking with abundant cysteine residues of hair keratins. The matrix proteins include the high-sulfur and high-glycine-tyrosine keratins. The polypeptide is Keratin-associated protein 4-6 (KRTAP4-6) (Homo sapiens (Human)).